The following is a 241-amino-acid chain: Protein TraL (241 aa).

The protein to plasmid IncP-alpha RP4 TraL.

In Escherichia coli, this protein is Protein TraL (traL).